The primary structure comprises 454 residues: Chromosomal replication initiator protein DnaA (454 aa).

The domain I, interacts with DnaA modulators stretch occupies residues 1 to 80 (MNLSNLWQSC…NPELRISLKE (80 aa)). Positions 80–117 (EGVKPAPKIVESTPNTSLRSESAVDFQAESSASVKFES) are domain II. Residues 118-335 (HLNTKHLFDN…GALNRVKAMQ (218 aa)) are domain III, AAA+ region. ATP-binding residues include Gly-163, Gly-165, Lys-166, and Thr-167. The tract at residues 336–454 (DFKGGDIDID…WANLIRTLSA (119 aa)) is domain IV, binds dsDNA.

It belongs to the DnaA family. As to quaternary structure, oligomerizes as a right-handed, spiral filament on DNA at oriC.

Its subcellular location is the cytoplasm. Plays an essential role in the initiation and regulation of chromosomal replication. ATP-DnaA binds to the origin of replication (oriC) to initiate formation of the DNA replication initiation complex once per cell cycle. Binds the DnaA box (a 9 base pair repeat at the origin) and separates the double-stranded (ds)DNA. Forms a right-handed helical filament on oriC DNA; dsDNA binds to the exterior of the filament while single-stranded (ss)DNA is stabiized in the filament's interior. The ATP-DnaA-oriC complex binds and stabilizes one strand of the AT-rich DNA unwinding element (DUE), permitting loading of DNA polymerase. After initiation quickly degrades to an ADP-DnaA complex that is not apt for DNA replication. Binds acidic phospholipids. The sequence is that of Chromosomal replication initiator protein DnaA from Haemophilus influenzae (strain ATCC 51907 / DSM 11121 / KW20 / Rd).